A 202-amino-acid polypeptide reads, in one-letter code: UPF0301 protein mlr7511 (202 aa).

It belongs to the UPF0301 (AlgH) family.

The protein is UPF0301 protein mlr7511 of Mesorhizobium japonicum (strain LMG 29417 / CECT 9101 / MAFF 303099) (Mesorhizobium loti (strain MAFF 303099)).